The primary structure comprises 76 residues: Small, acid-soluble spore protein Tlp (76 aa).

Composition is skewed to basic and acidic residues over residues 1 to 15 (MAKR…ERIE), 26 to 38 (DEAR…HSEE), and 46 to 76 (EIEQ…KNNS). Positions 1–76 (MAKRDDRSNN…DEVNDQKNNS (76 aa)) are disordered.

The protein belongs to the Tlp family.

The protein localises to the spore core. This is Small, acid-soluble spore protein Tlp from Shouchella clausii (strain KSM-K16) (Alkalihalobacillus clausii).